The following is a 256-amino-acid chain: Protein YABBY 4 (256 aa).

The C4-type zinc-finger motif lies at 30 to 57 (CNCCDTILAVGVPCSSLFKTVTVRCGHC). Positions 127–168 (SCASNAPAMQMPPAKPVQQEPELPKNAPASANRPPEKRQRVP) are disordered.

The protein belongs to the YABBY family. Preferentially expressed in immature organs containing meristems and organ primordia. Expressed in phloem of developing vascular tissues of young seedling shoots. Expressed in the phloem of midvein vasculature of young leaves. Does not show polar expression pattern in leaf primordia.

Its subcellular location is the nucleus. Functionally, seems to be associated with phloem cell differentiation. The chain is Protein YABBY 4 (YAB4) from Oryza sativa subsp. japonica (Rice).